Consider the following 132-residue polypeptide: Protein NrdI (132 aa).

Belongs to the NrdI family.

Its function is as follows. Probably involved in ribonucleotide reductase function. The protein is Protein NrdI of Staphylococcus haemolyticus (strain JCSC1435).